The following is a 473-amino-acid chain: H(+)/Cl(-) exchange transporter ClcA (473 aa).

The Cytoplasmic portion of the chain corresponds to 1–32 (MKTDTPSLETPQAARLRRRQLIRQLLERDKTP). The helical transmembrane segment at 33–69 (LAILFMAAVVGTLVGLAAVAFDKGVAWLQNQRMGALV) threads the bilayer. Over 70–76 (HTADNYP) the chain is Periplasmic. A helical membrane pass occupies residues 77–100 (LLLTVAFLCSAVLAMFGYFLVRKY). The Selectivity filter part_1 signature appears at 106 to 110 (GSGIP). Ser-107 is a binding site for chloride. Positions 109 to 116 (IPEIEGAL) form an intramembrane region, helical. Residues 117-123 (EDQRPVR) lie on the Cytoplasmic side of the membrane. A run of 2 helical transmembrane segments spans residues 124 to 141 (WWRVLPVKFFGGLGTLGG) and 148 to 166 (EGPTVQIGGNIGRMVLDIF). Residues 146-150 (GREGP) carry the Selectivity filter part_2 motif. At 167-176 (RLKGDEARHT) the chain is on the cytoplasmic side. 2 intramembrane regions (helical) span residues 177–189 (LLATGAAAGLAAA) and 193–201 (PLAGILFII). The Cytoplasmic segment spans residues 202–214 (EEMRPQFRYTLIS). The chain crosses the membrane as a helical span at residues 215-232 (IKAVFIGVIMSTIMYRIF). At 233–252 (NHEVALIDVGKLSDAPLNTQ) the chain is on the periplasmic side. A helical membrane pass occupies residues 253-281 (WLYLILGIIFGIFGPIFNKWVLGMQDLLH). At 282–287 (RVHGGN) the chain is on the cytoplasmic side. The chain crosses the membrane as a helical span at residues 288–309 (ITKWVLMGGAIGGLCGLLGFVA). The Periplasmic segment spans residues 310-329 (PATSGGGFNLIPIATAGNFS). 2 consecutive transmembrane segments (helical) span residues 330–349 (MGMLVFIFVARVITTLLCFS) and 355–376 (GIFAPMLALGTVLGTAFGMVVV). The Selectivity filter part_3 signature appears at 355–359 (GIFAP). Chloride is bound by residues Ile-356 and Phe-357. At 377-386 (ELFPQYHLEA) the chain is on the periplasmic side. The segment at residues 387 to 401 (GTFAIAGMGALLAAS) is an intramembrane region (helical). The note=Loop between two helices intramembrane region spans 402–404 (IRA). Residues 405–416 (PLTGIILVLEMT) constitute an intramembrane region (helical). The note=Loop between two helices intramembrane region spans 417 to 421 (DNYQL). Residues 422–438 (ILPMIITGLGATLLAQF) form a helical membrane-spanning segment. At 439-473 (TGGKPLYSAILARTLAKQEAEQLARSKAASASENT) the chain is on the cytoplasmic side. Tyr-445 contacts chloride.

The protein belongs to the chloride channel (TC 2.A.49) family. ClcA subfamily. In terms of assembly, homodimer.

The protein resides in the cell inner membrane. It carries out the reaction 2 chloride(in) + H(+)(out) = 2 chloride(out) + H(+)(in). Its function is as follows. Proton-coupled chloride transporter. Functions as antiport system and exchanges two chloride ions for 1 proton. Probably acts as an electrical shunt for an outwardly-directed proton pump that is linked to amino acid decarboxylation, as part of the extreme acid resistance (XAR) response. This is H(+)/Cl(-) exchange transporter ClcA from Shigella boydii serotype 18 (strain CDC 3083-94 / BS512).